A 396-amino-acid chain; its full sequence is Na(+)/H(+) antiporter NhaA 1 (396 aa).

11 consecutive transmembrane segments (helical) span residues 18-38, 60-80, 95-115, 126-146, 155-175, 178-198, 201-221, 262-282, 295-315, 333-353, and 362-382; these read LLLI…LSWL, LLLW…GLEV, IALP…IYTG, GWAI…ALLG, LFLL…IALF, ADLS…LFIL, TGVT…ICVL, VAYG…LAGI, IAAG…WIGV, GMAV…TLAL, and AARL…YYLL.

The protein belongs to the NhaA Na(+)/H(+) (TC 2.A.33) antiporter family.

It localises to the cell inner membrane. It carries out the reaction Na(+)(in) + 2 H(+)(out) = Na(+)(out) + 2 H(+)(in). Functionally, na(+)/H(+) antiporter that extrudes sodium in exchange for external protons. This is Na(+)/H(+) antiporter NhaA 1 from Syntrophotalea carbinolica (strain DSM 2380 / NBRC 103641 / GraBd1) (Pelobacter carbinolicus).